The following is a 109-amino-acid chain: Large ribosomal subunit protein uL22 (109 aa).

The protein belongs to the universal ribosomal protein uL22 family. In terms of assembly, part of the 50S ribosomal subunit.

Its function is as follows. This protein binds specifically to 23S rRNA; its binding is stimulated by other ribosomal proteins, e.g. L4, L17, and L20. It is important during the early stages of 50S assembly. It makes multiple contacts with different domains of the 23S rRNA in the assembled 50S subunit and ribosome. The globular domain of the protein is located near the polypeptide exit tunnel on the outside of the subunit, while an extended beta-hairpin is found that lines the wall of the exit tunnel in the center of the 70S ribosome. This Bordetella avium (strain 197N) protein is Large ribosomal subunit protein uL22.